A 539-amino-acid chain; its full sequence is MKLLAVRRLFRIQRVVIRYRLDDLLFALPLPWWMLAVRFVLPWRWLPRRKSELSRGVRFRLALQDLGPIFIKFGQLLSTRRDLLPEDIADELMLLQDRVPPFDQQVAIKLIEEQLGARICDVFSRFDETPLASASVAQVHAACLKTGEEVVVKVVRPGLKPIIGQDLAWLFILARMAERVSADARLLHPVQVVMDYEKTIYDELDLLREAANSSQLRRNFEGSDLLYVPQVYWDWCRPKVLVMERIYGLQVTDMAGLADQRTDMKMLAERGVEIFFTQIFRDSFFHADMHPGNIFVSTVNPWAPKYIAIDCGIVGSLTPEDQDYLARNLFAFFKRDYRRVAQLHIDSGWVPAETKLNEFEAAIRTVCEPIFEKPLKDISFGQVLMRLFQTARRFNMEVQPQLVLLQKTLLNIEGLGRQLYPELDLWSTAQPYLERWMRERVSPKTLLGNLQSQVEQLPHIAGMTRDLLERMSRPHASDPPRPWHDRKDEPVLRLIGAALLVGGAIQGWVMSEAATQLLTLTAWPAAIMLIAGLYLIVRR.

Residues 23–43 (DLLFALPLPWWMLAVRFVLPW) form a helical membrane-spanning segment. In terms of domain architecture, Protein kinase spans 125–492 (RFDETPLASA…WHDRKDEPVL (368 aa)). ATP-binding positions include 131–139 (LASASVAQV) and K153. D288 (proton acceptor) is an active-site residue. Helical transmembrane passes span 494 to 514 (LIGA…SEAA) and 517 to 537 (LLTL…YLIV).

It belongs to the ABC1 family. UbiB subfamily.

Its subcellular location is the cell inner membrane. The protein operates within cofactor biosynthesis; ubiquinone biosynthesis [regulation]. Is probably a protein kinase regulator of UbiI activity which is involved in aerobic coenzyme Q (ubiquinone) biosynthesis. The chain is Probable protein kinase UbiB from Pseudomonas syringae pv. tomato (strain ATCC BAA-871 / DC3000).